The following is an 81-amino-acid chain: Small ribosomal subunit protein bS16 (81 aa).

The protein belongs to the bacterial ribosomal protein bS16 family.

The chain is Small ribosomal subunit protein bS16 from Neisseria gonorrhoeae (strain ATCC 700825 / FA 1090).